A 125-amino-acid chain; its full sequence is Large ribosomal subunit protein bL12 (125 aa).

The protein belongs to the bacterial ribosomal protein bL12 family. Homodimer. Part of the ribosomal stalk of the 50S ribosomal subunit. Forms a multimeric L10(L12)X complex, where L10 forms an elongated spine to which 2 to 4 L12 dimers bind in a sequential fashion. Binds GTP-bound translation factors.

In terms of biological role, forms part of the ribosomal stalk which helps the ribosome interact with GTP-bound translation factors. Is thus essential for accurate translation. This Gluconacetobacter diazotrophicus (strain ATCC 49037 / DSM 5601 / CCUG 37298 / CIP 103539 / LMG 7603 / PAl5) protein is Large ribosomal subunit protein bL12.